The sequence spans 364 residues: MAQQTPLYEQHTLCGARMVDFHGWMMPLHYGSQIDEHHAVRTDAGMFDVSHMTIVDLRGSRTREFLRYLLANDVAKLTKSGKALYSGMLNASGGVIDDLIVYYFTEDFFRLVVNSATREKDLSWITQHAEPFGIEITVRDDLSMIAVQGPNAQAKAATLFNDAQRQAVEGMKPFFGVQAGDLFIATTGYTGEVGYEIALPNEKAADFWRALVEAGVKPCGLGARDTLRLEAGMNLYSQEMDETISPLAANMGWTIAWEPADRDFIGREALEAQREHGTEKLVGLVMTEKGVLRNELPVRFTDAQGNQHEGIITSGTFSPTLGYSIALARVPEGIGETAIVQIRNREMPVKVTKPVFVRNGKAVA.

This sequence belongs to the GcvT family. As to quaternary structure, the glycine cleavage system is composed of four proteins: P, T, L and H.

The enzyme catalyses N(6)-[(R)-S(8)-aminomethyldihydrolipoyl]-L-lysyl-[protein] + (6S)-5,6,7,8-tetrahydrofolate = N(6)-[(R)-dihydrolipoyl]-L-lysyl-[protein] + (6R)-5,10-methylene-5,6,7,8-tetrahydrofolate + NH4(+). In terms of biological role, the glycine cleavage system catalyzes the degradation of glycine. The chain is Aminomethyltransferase from Escherichia coli O81 (strain ED1a).